The chain runs to 183 residues: Large ribosomal subunit protein uL5 (183 aa).

Belongs to the universal ribosomal protein uL5 family. Part of the 50S ribosomal subunit; part of the 5S rRNA/L5/L18/L25 subcomplex. Contacts the 5S rRNA and the P site tRNA. Forms a bridge to the 30S subunit in the 70S ribosome.

Its function is as follows. This is one of the proteins that bind and probably mediate the attachment of the 5S RNA into the large ribosomal subunit, where it forms part of the central protuberance. In the 70S ribosome it contacts protein S13 of the 30S subunit (bridge B1b), connecting the 2 subunits; this bridge is implicated in subunit movement. Contacts the P site tRNA; the 5S rRNA and some of its associated proteins might help stabilize positioning of ribosome-bound tRNAs. This Fusobacterium nucleatum subsp. nucleatum (strain ATCC 25586 / DSM 15643 / BCRC 10681 / CIP 101130 / JCM 8532 / KCTC 2640 / LMG 13131 / VPI 4355) protein is Large ribosomal subunit protein uL5.